The following is a 504-amino-acid chain: ATP synthase subunit alpha (504 aa).

G170–T177 contributes to the ATP binding site.

The protein belongs to the ATPase alpha/beta chains family. As to quaternary structure, F-type ATPases have 2 components, CF(1) - the catalytic core - and CF(0) - the membrane proton channel. CF(1) has five subunits: alpha(3), beta(3), gamma(1), delta(1), epsilon(1). CF(0) has four main subunits: a, b, b' and c.

The protein resides in the cellular thylakoid membrane. It carries out the reaction ATP + H2O + 4 H(+)(in) = ADP + phosphate + 5 H(+)(out). In terms of biological role, produces ATP from ADP in the presence of a proton gradient across the membrane. The alpha chain is a regulatory subunit. This chain is ATP synthase subunit alpha, found in Prochlorococcus marinus (strain MIT 9211).